The sequence spans 498 residues: MRTNPTTSSPVVSTLEEKNLGRIAQIIGPVLDVVFPPGKMPNIYNALVVEGRDTVGQQINVTCEVQQLLGNNRVRAVAMSATDGLMRGMEVIDTGAPLSVPVGGATLGRIFNVLGEPVDNLGPVDTRTTSPIHRSAPAFIQLDTKLSIFETGIKVVDLLAPYRRGGKIGLFGGAGVGKTVLIMELINNIAKAHGGVSVFGGVGERTREGNDLYMEMKESGVINEKNIAESKVALVYGQMNEPPGARMRVGLTALTMAEYFRDVNEQDVLLFIDNIFRFVQAGSEVSALLGRMPSAVGYQPTLSTEMGSLQERITSTKEGSITSIQAVYVPADDLTDPAPATTFAHLDATTVLSRVLAAKGIYPAVDPLDSTSTMLQPRIVGEEHYETAQRVKQTSQRYKELQDIIAILGLDELSEEDRLTVARARKIERFLSQPFFVAEVFTGSPGKYVGLAETIRGFQLILSGELDGLPEQAFYLVGNIDEATAKAMNLEVESKLKK.

Residue 172–179 participates in ATP binding; the sequence is GGAGVGKT.

It belongs to the ATPase alpha/beta chains family. As to quaternary structure, F-type ATPases have 2 components, CF(1) - the catalytic core - and CF(0) - the membrane proton channel. CF(1) has five subunits: alpha(3), beta(3), gamma(1), delta(1), epsilon(1). CF(0) has four main subunits: a(1), b(1), b'(1) and c(9-12).

It is found in the plastid. The protein localises to the chloroplast thylakoid membrane. The catalysed reaction is ATP + H2O + 4 H(+)(in) = ADP + phosphate + 5 H(+)(out). Its function is as follows. Produces ATP from ADP in the presence of a proton gradient across the membrane. The catalytic sites are hosted primarily by the beta subunits. The protein is ATP synthase subunit beta, chloroplastic of Salacca zalacca (Snake palm).